The sequence spans 417 residues: NADH-quinone oxidoreductase subunit D (417 aa).

The protein belongs to the complex I 49 kDa subunit family. As to quaternary structure, NDH-1 is composed of 14 different subunits. Subunits NuoB, C, D, E, F, and G constitute the peripheral sector of the complex.

Its subcellular location is the cell inner membrane. It carries out the reaction a quinone + NADH + 5 H(+)(in) = a quinol + NAD(+) + 4 H(+)(out). In terms of biological role, NDH-1 shuttles electrons from NADH, via FMN and iron-sulfur (Fe-S) centers, to quinones in the respiratory chain. The immediate electron acceptor for the enzyme in this species is believed to be ubiquinone. Couples the redox reaction to proton translocation (for every two electrons transferred, four hydrogen ions are translocated across the cytoplasmic membrane), and thus conserves the redox energy in a proton gradient. In Legionella pneumophila subsp. pneumophila (strain Philadelphia 1 / ATCC 33152 / DSM 7513), this protein is NADH-quinone oxidoreductase subunit D.